The sequence spans 59 residues: Large ribosomal subunit protein bL32 (59 aa).

The tract at residues 1-20 (MAVQKNKPTRSKRGMRRSHD) is disordered. A compositionally biased stretch (basic residues) spans 7 to 19 (KPTRSKRGMRRSH).

The protein belongs to the bacterial ribosomal protein bL32 family.

The sequence is that of Large ribosomal subunit protein bL32 from Wigglesworthia glossinidia brevipalpis.